Reading from the N-terminus, the 525-residue chain is GMP synthase [glutamine-hydrolyzing] (525 aa).

In terms of domain architecture, Glutamine amidotransferase type-1 spans 16–205 (PVLVVDFGAQ…LHDFAGLGAD (190 aa)). The Nucleophile role is filled by cysteine 93. Active-site residues include histidine 179 and glutamate 181. The region spanning 206–399 (WTAANIAGVL…LGLPEEIVAR (194 aa)) is the GMPS ATP-PPase domain. Position 233 to 239 (233 to 239 (SGGVDSA)) interacts with ATP.

As to quaternary structure, homodimer.

The catalysed reaction is XMP + L-glutamine + ATP + H2O = GMP + L-glutamate + AMP + diphosphate + 2 H(+). It participates in purine metabolism; GMP biosynthesis; GMP from XMP (L-Gln route): step 1/1. Functionally, catalyzes the synthesis of GMP from XMP. The chain is GMP synthase [glutamine-hydrolyzing] from Mycolicibacterium paratuberculosis (strain ATCC BAA-968 / K-10) (Mycobacterium paratuberculosis).